Here is a 336-residue protein sequence, read N- to C-terminus: UDP-N-acetylenolpyruvoylglucosamine reductase (336 aa).

Residues 17–188 (LRSLAERFVE…WDVTFRLPKK (172 aa)) enclose the FAD-binding PCMH-type domain. Arg-164 is a catalytic residue. Ser-237 functions as the Proton donor in the catalytic mechanism. Residue Glu-332 is part of the active site.

Belongs to the MurB family. Requires FAD as cofactor.

It localises to the cytoplasm. It carries out the reaction UDP-N-acetyl-alpha-D-muramate + NADP(+) = UDP-N-acetyl-3-O-(1-carboxyvinyl)-alpha-D-glucosamine + NADPH + H(+). The protein operates within cell wall biogenesis; peptidoglycan biosynthesis. Functionally, cell wall formation. The chain is UDP-N-acetylenolpyruvoylglucosamine reductase from Bdellovibrio bacteriovorus (strain ATCC 15356 / DSM 50701 / NCIMB 9529 / HD100).